A 678-amino-acid chain; its full sequence is Exoribonuclease 2 (678 aa).

The 329-residue stretch at Arg-193 to Ile-521 folds into the RNB domain. In terms of domain architecture, S1 motif spans Glu-568–Thr-650. The interval Ser-658–Ala-678 is disordered.

This sequence belongs to the RNR ribonuclease family. RNase II subfamily.

It localises to the cytoplasm. The enzyme catalyses Exonucleolytic cleavage in the 3'- to 5'-direction to yield nucleoside 5'-phosphates.. In terms of biological role, involved in mRNA degradation. Hydrolyzes single-stranded polyribonucleotides processively in the 3' to 5' direction. The polypeptide is Exoribonuclease 2 (Vibrio cholerae serotype O1 (strain ATCC 39541 / Classical Ogawa 395 / O395)).